Consider the following 633-residue polypeptide: DNA polymerase DpoZ (633 aa).

This sequence belongs to the DNA polymerase type-A family. DpoZ subfamily.

The catalysed reaction is DNA(n) + a 2'-deoxyribonucleoside 5'-triphosphate = DNA(n+1) + diphosphate. It carries out the reaction dZTP + DNA(n) = DNA(n)-Z + diphosphate. DNA polymerase that preferentially incorporates the non-canonical base aminoadenine/dZTP instead of adenine into the synthesized DNA. More efficient in using dZTP instead of dATP as a substrate. In addition to this preference for dZTP, the phage also encodes a dATP triphosphohydrolase that removes dATP and its precursor dADP from the nucleotide pool of the host. In Vibrio phage phiVC8, this protein is DNA polymerase DpoZ (dpoZ).